Reading from the N-terminus, the 289-residue chain is Spore coat polysaccharide biosynthesis protein SpsD (289 aa).

Positions 137–289 (FELGPPEPGD…YHIWPGKEAK (153 aa)) constitute an N-acetyltransferase domain.

It participates in spore coat biogenesis; spore coat polysaccharide biosynthesis. The polypeptide is Spore coat polysaccharide biosynthesis protein SpsD (spsD) (Bacillus subtilis (strain 168)).